Consider the following 883-residue polypeptide: uncharacterized protein (883 aa).

The segment at 258–373 is disordered; the sequence is INNQSDNQSN…NQFNKPDNEP (116 aa). Composition is skewed to low complexity over residues 259–268, 277–317, and 324–333; these read NNQSDNQSNS, EPNG…SNSE, and NEPNTEPNTE. Residues 334-347 are compositionally biased toward polar residues; that stretch reads SNGQSNSELNNQSD. Positions 348–368 are enriched in low complexity; that stretch reads NHPNNEPNSEPNNEPNNQFNK.

Belongs to the mimivirus L137 family.

This is an uncharacterized protein from Acanthamoeba polyphaga mimivirus (APMV).